We begin with the raw amino-acid sequence, 509 residues long: MDIRAAEISAILKDQIKNFGNEAEVSEVGQVLSVGDGIARVYGLDNVQAGEMVEFPGGIRGMALNLEADNVGVVIFGSDRSIKEGDTVKRTGAIVDVPVGPELLGRVVDALGNPIDGKGPINAAKRSRVDVKAPGIIPRKSVHEPMSTGLKAIDALIPVGRGQRELVIGDRQTGKTAIILDTILNQKAIHDNGPDGDKLYCVYVAIGQKRSTVAQFVKVLEERGALQYSIIVAATASDPAPMQYLAPFAGCAMGEYFRDNGKHALIGYDDLSKQAVAYRQMSLLLRRPPGREAYPGDVFYLHSRLLERAAKLSDEMGAGSLTALPVIETQGNDVSAFIPTNVISITDGQIFLETDLFYQGIRPAVNVGLSVSRVGSAAQIKAMKQVAGSIKGELAQYREMAAFAQFGSDLDASTQRLLNRGARLTELLKQPQFSPLKTEEQVAVIFAGVNGYLDKIPVAQVGKFEQGFLSYLRSEGKAILDTIRTEKAISDDTKGKLKGALDNFAKSFS.

169–176 is a binding site for ATP; it reads GDRQTGKT.

It belongs to the ATPase alpha/beta chains family. As to quaternary structure, F-type ATPases have 2 components, CF(1) - the catalytic core - and CF(0) - the membrane proton channel. CF(1) has five subunits: alpha(3), beta(3), gamma(1), delta(1), epsilon(1). CF(0) has three main subunits: a(1), b(2) and c(9-12). The alpha and beta chains form an alternating ring which encloses part of the gamma chain. CF(1) is attached to CF(0) by a central stalk formed by the gamma and epsilon chains, while a peripheral stalk is formed by the delta and b chains.

It localises to the cell inner membrane. It carries out the reaction ATP + H2O + 4 H(+)(in) = ADP + phosphate + 5 H(+)(out). Produces ATP from ADP in the presence of a proton gradient across the membrane. The alpha chain is a regulatory subunit. This Agrobacterium fabrum (strain C58 / ATCC 33970) (Agrobacterium tumefaciens (strain C58)) protein is ATP synthase subunit alpha.